A 287-amino-acid polypeptide reads, in one-letter code: Ribosomal RNA small subunit methyltransferase I (287 aa).

This sequence belongs to the methyltransferase superfamily. RsmI family.

The protein resides in the cytoplasm. It catalyses the reaction cytidine(1402) in 16S rRNA + S-adenosyl-L-methionine = 2'-O-methylcytidine(1402) in 16S rRNA + S-adenosyl-L-homocysteine + H(+). Catalyzes the 2'-O-methylation of the ribose of cytidine 1402 (C1402) in 16S rRNA. The chain is Ribosomal RNA small subunit methyltransferase I from Helicobacter pylori (strain ATCC 700392 / 26695) (Campylobacter pylori).